The following is a 262-amino-acid chain: Type III pantothenate kinase (262 aa).

Residue 9-16 (DIGNTNIV) coordinates ATP. Residues Tyr-103 and 110–113 (GVDR) contribute to the substrate site. Asp-112 serves as the catalytic Proton acceptor. A K(+)-binding site is contributed by Asp-132. Thr-135 serves as a coordination point for ATP. Thr-187 contacts substrate.

The protein belongs to the type III pantothenate kinase family. As to quaternary structure, homodimer. It depends on NH4(+) as a cofactor. K(+) is required as a cofactor.

Its subcellular location is the cytoplasm. The catalysed reaction is (R)-pantothenate + ATP = (R)-4'-phosphopantothenate + ADP + H(+). It participates in cofactor biosynthesis; coenzyme A biosynthesis; CoA from (R)-pantothenate: step 1/5. In terms of biological role, catalyzes the phosphorylation of pantothenate (Pan), the first step in CoA biosynthesis. This Finegoldia magna (strain ATCC 29328 / DSM 20472 / WAL 2508) (Peptostreptococcus magnus) protein is Type III pantothenate kinase.